The following is a 323-amino-acid chain: Calcium homeostasis modulator protein 2 (323 aa).

Residues 1-21 are Cytoplasmic-facing; the sequence is MAALIAENFRFLSLFFKSKDV. Residues 14-39 are central pore; sequence LFFKSKDVMIFNGLVALGTVGSQELF. The chain crosses the membrane as a helical span at residues 22–43; the sequence is MIFNGLVALGTVGSQELFSVVA. Topologically, residues 44–52 are extracellular; that stretch reads FHCPCSPAR. Intrachain disulfides connect Cys46–Cys130 and Cys48–Cys162. The helical transmembrane segment at 53–76 threads the bilayer; it reads NYLYGLTAIGVPALALFLIGVILN. The Cytoplasmic segment spans residues 77-101; it reads NHTWNLVAECQYRRAKNCSAAPTFL. Residues 102–132 form a helical membrane-spanning segment; that stretch reads LLSSILGRAAVAPVTWSVISLLRGEAYVCAL. Residues 133–179 are Extracellular-facing; it reads SEFVDPSSLTAGDEGFPPDHATEILARFPCGEGPANLSGFREEVSRR. Positions 145-152 are hemichannel docking; that stretch reads DEGFPPDH. The chain crosses the membrane as a helical span at residues 180–206; it reads LKYESQLFGWLLIGVVAILVFLTKCFK. Residues 207-323 lie on the Cytoplasmic side of the membrane; the sequence is HYCSPLSYRQ…DNVEMALLTV (117 aa). Positions 214–251 are intersubunit interaction; that stretch reads YRQEAYWAQYRTNEDQLFQRTAEVHSRVLAANNVRRFF.

Belongs to the CALHM family. Homo-undecamer. Two undecameric hemichannels can assemble in a head-to-head manner to form a gap junction.

It localises to the cell membrane. It catalyses the reaction ATP(in) = ATP(out). Its function is as follows. Pore-forming subunit of Ca(2+) homeostasis modulator channels. Mediates ATP release from astrocytes and ATP-induced Ca(2+) influx in microglia thus regulating neuronal ATP and Ca(2+) homeostasis, synaptic transmission and neuroinflammatory response. May form intercellular gap junctions. The gating mechanism remains unknown. The chain is Calcium homeostasis modulator protein 2 (Calhm2) from Rattus norvegicus (Rat).